The primary structure comprises 826 residues: Lon protease (826 aa).

The Lon N-terminal domain maps to 26-221 (LPMLPVRDVV…AVNGFVSREV (196 aa)). Residue 373–380 (GPPGVGKT) coordinates ATP. Positions 609–790 (EPQIGLATGL…NEVLEKALLP (182 aa)) constitute a Lon proteolytic domain. Catalysis depends on residues S696 and K739. The interval 788–826 (LLPAEKKKAPPKKKPPKKAAKPKAKKTQPKAKTTEAADK) is disordered. Over residues 796–816 (APPKKKPPKKAAKPKAKKTQP) the composition is skewed to basic residues.

It belongs to the peptidase S16 family. In terms of assembly, homohexamer. Organized in a ring with a central cavity.

The protein localises to the cytoplasm. The catalysed reaction is Hydrolysis of proteins in presence of ATP.. In terms of biological role, ATP-dependent serine protease that mediates the selective degradation of mutant and abnormal proteins as well as certain short-lived regulatory proteins. Required for cellular homeostasis and for survival from DNA damage and developmental changes induced by stress. Degrades polypeptides processively to yield small peptide fragments that are 5 to 10 amino acids long. Binds to DNA in a double-stranded, site-specific manner. This Desulfatibacillum aliphaticivorans protein is Lon protease.